A 351-amino-acid chain; its full sequence is Spermidine/putrescine import ATP-binding protein PotA (351 aa).

The ABC transporter domain occupies 6–236 (LELRNVTKEY…PENAWVANFI (231 aa)). ATP is bound at residue 38 to 45 (GPSGCGKT).

This sequence belongs to the ABC transporter superfamily. Spermidine/putrescine importer (TC 3.A.1.11.1) family. As to quaternary structure, the complex is composed of two ATP-binding proteins (PotA), two transmembrane proteins (PotB and PotC) and a solute-binding protein (PotD).

Its subcellular location is the cell membrane. The catalysed reaction is ATP + H2O + polyamine-[polyamine-binding protein]Side 1 = ADP + phosphate + polyamineSide 2 + [polyamine-binding protein]Side 1.. Its function is as follows. Part of the ABC transporter complex PotABCD involved in spermidine/putrescine import. Responsible for energy coupling to the transport system. The protein is Spermidine/putrescine import ATP-binding protein PotA of Mycoplasma mycoides subsp. mycoides SC (strain CCUG 32753 / NCTC 10114 / PG1).